We begin with the raw amino-acid sequence, 84 residues long: Toxin Cll9 (84 aa).

A signal peptide spans 1 to 19 (MNSLLMITACLILIGTVWA). In terms of domain architecture, LCN-type CS-alpha/beta spans 20–83 (EDGYLFDKRK…ISRTPGKTCK (64 aa)). Disulfide bonds link C31–C82, C35–C58, C44–C63, and C48–C65.

As to expression, expressed by the venom gland.

The protein localises to the secreted. Functionally, beta toxins bind voltage-independently at site-4 of sodium channels (Nav) and shift the voltage of activation toward more negative potentials thereby affecting sodium channel activation and promoting spontaneous and repetitive firing. Has some action on peripheral ganglia, but not on other sodium channels such as those from cerebellum granular cells in culture. Induces sleep, suggesting a strong antiepileptic action. This is Toxin Cll9 from Centruroides limpidus (Mexican scorpion).